The sequence spans 156 residues: Ribosomal RNA large subunit methyltransferase H (156 aa).

Residues leucine 73, glycine 104, and 123–128 (LSPLTL) each bind S-adenosyl-L-methionine.

This sequence belongs to the RNA methyltransferase RlmH family. In terms of assembly, homodimer.

Its subcellular location is the cytoplasm. The enzyme catalyses pseudouridine(1915) in 23S rRNA + S-adenosyl-L-methionine = N(3)-methylpseudouridine(1915) in 23S rRNA + S-adenosyl-L-homocysteine + H(+). Functionally, specifically methylates the pseudouridine at position 1915 (m3Psi1915) in 23S rRNA. In Sodalis glossinidius (strain morsitans), this protein is Ribosomal RNA large subunit methyltransferase H.